Here is a 161-residue protein sequence, read N- to C-terminus: Protein yippee-like B0546.4 (161 aa).

The Yippee domain maps to 14–111 (SLYGCVVCNT…IENANFEKIA (98 aa)). The Zn(2+) site is built by C18, C21, C74, and C77. The segment at 117-161 (PLGEDRQEAPPAPNLEMSRYPLEAEKKSRPQYRTVSVSSSSSAEC) is disordered. The segment covering 151–161 (VSVSSSSSAEC) has biased composition (low complexity).

This sequence belongs to the yippee family.

The chain is Protein yippee-like B0546.4 from Caenorhabditis elegans.